The primary structure comprises 630 residues: MALVSILPLSSKSVLHKSWIVSTYEHKAISRTIPNLGLRGRGKSVTHSLRMSLSTAVSDDHGVQRRIVEFHSNLWDDDFIQSLSTPYGAPSYRERADRLIVEVKGIFTSISAEDGELITPLNDLIQRLLMVDNVERLGIDRHFKNEIKAALDYVYSYWNEKGIGSGSDSGVADLNSTALGFRILRLHGYSVSSDVLEHFKEEKEKGQFVCSAIQTEEEIKSVLNLFRASLIAFPGEKVMEEAEIFSKIYLKEALQNIAVSSLSREIEYVLEDGWQTNMPRLETRNYIDVLGENDRDETLYMNMEKLLEIAKLEFNIFHSLQQRELKDLSRWWKDSGFSHLTFSRHRHVEFYALASCIETDRKHSGFRLGFAKMCHLITVLDDIYDTFGTMEELELFTAAFKRWDPSATDLLPEYMKGLYMVVYETVNEIAREADKSQGRETLNDARRAWEAYLDSYMKEAEWISSGYLPTFEEYMETSKVSFGYRIFALQPILTMDVPLTHHILQEIDFPLRFNDLICSILRLKNDTRCYKADRARGEEASCISCYMKENPGSTEEDAINHINAMVNNLIKEVNWELLRQDGTAHIACKKHAFDILKGSLHGYKYRDGFSVANKETKNWVRRTVLESVPL.

A chloroplast-targeting transit peptide spans 1-52 (MALVSILPLSSKSVLHKSWIVSTYEHKAISRTIPNLGLRGRGKSVTHSLRMS). Positions 381, 385, 525, and 533 each coordinate Mg(2+). Residues 381–385 (DDIYD) carry the DDXXD motif motif.

This sequence belongs to the terpene synthase family. Tpsd subfamily. Mg(2+) is required as a cofactor. It depends on Mn(2+) as a cofactor. The cofactor is K(+).

Its subcellular location is the plastid. It localises to the chloroplast. It carries out the reaction (2E)-geranyl diphosphate = terpinolene + diphosphate. The protein operates within terpene metabolism; oleoresin biosynthesis. Functionally, involved in defensive oleoresin formation in conifers in response to insect attack or other injury. Involved in monoterpene (C10) olefins biosynthesis. The sequence is that of Terpinolene synthase, chloroplastic (ag9) from Abies grandis (Grand fir).